The primary structure comprises 166 residues: Lipoprotein signal peptidase (166 aa).

The next 4 helical transmembrane spans lie at 9–29, 45–65, 71–91, and 100–120; these read ASGA…FDQL, ALTS…FGFL, WQRW…CFLL, and FSLS…DRLV. Active-site residues include Asp126 and Asp144. The chain crosses the membrane as a helical span at residues 135–155; that stretch reads WHFPAFNLADSAITVGAVLLV.

It belongs to the peptidase A8 family.

The protein resides in the cell inner membrane. The enzyme catalyses Release of signal peptides from bacterial membrane prolipoproteins. Hydrolyzes -Xaa-Yaa-Zaa-|-(S,diacylglyceryl)Cys-, in which Xaa is hydrophobic (preferably Leu), and Yaa (Ala or Ser) and Zaa (Gly or Ala) have small, neutral side chains.. It participates in protein modification; lipoprotein biosynthesis (signal peptide cleavage). Its function is as follows. This protein specifically catalyzes the removal of signal peptides from prolipoproteins. The chain is Lipoprotein signal peptidase from Burkholderia ambifaria (strain MC40-6).